We begin with the raw amino-acid sequence, 227 residues long: Orotidine 5'-phosphate decarboxylase (227 aa).

Residues Asp8, Lys30, 59–68 (DLKLYDIPYT), Thr118, Arg178, Gln187, Gly207, and Arg208 each bind substrate. The active-site Proton donor is Lys61.

It belongs to the OMP decarboxylase family. Type 1 subfamily. In terms of assembly, homodimer.

It catalyses the reaction orotidine 5'-phosphate + H(+) = UMP + CO2. The protein operates within pyrimidine metabolism; UMP biosynthesis via de novo pathway; UMP from orotate: step 2/2. Catalyzes the decarboxylation of orotidine 5'-monophosphate (OMP) to uridine 5'-monophosphate (UMP). The protein is Orotidine 5'-phosphate decarboxylase of Helicobacter pylori (strain ATCC 700392 / 26695) (Campylobacter pylori).